The primary structure comprises 385 residues: Trichodiene synthase (385 aa).

The protein belongs to the trichodiene synthase family.

It carries out the reaction (2E,6E)-farnesyl diphosphate = trichodiene + diphosphate. It participates in sesquiterpene biosynthesis; trichothecene biosynthesis. In terms of biological role, TS is a member of the terpene cyclase group of enzymes. It catalyzes the isomerization and cyclization of farnesyl pyro-phosphate to form trichodiene, the first cyclic intermediate in the biosynthetic pathway for trichothecenes. It serves to branch trichothecene biosynthesis from the isoprenoid pathway. The protein is Trichodiene synthase (TRI5) of Paramyrothecium roridum (Myrothecium leaf spot fungus).